Here is a 379-residue protein sequence, read N- to C-terminus: Cytochrome b (379 aa).

4 consecutive transmembrane segments (helical) span residues 33-53 (FGSL…FLAM), 77-98 (WLIR…YFHI), 113-133 (WNMG…GYVL), and 178-198 (FFAF…IHLL). Heme b is bound by residues H83 and H97. The heme b site is built by H182 and H196. Position 201 (H201) interacts with a ubiquinone. 4 helical membrane-spanning segments follow: residues 226-246 (IKDI…VMFS), 288-308 (LGGV…PILH), 320-340 (LSQC…WIGG), and 347-367 (FITI…ILMP).

Belongs to the cytochrome b family. The cytochrome bc1 complex contains 11 subunits: 3 respiratory subunits (MT-CYB, CYC1 and UQCRFS1), 2 core proteins (UQCRC1 and UQCRC2) and 6 low-molecular weight proteins (UQCRH/QCR6, UQCRB/QCR7, UQCRQ/QCR8, UQCR10/QCR9, UQCR11/QCR10 and a cleavage product of UQCRFS1). This cytochrome bc1 complex then forms a dimer. The cofactor is heme b.

The protein localises to the mitochondrion inner membrane. Functionally, component of the ubiquinol-cytochrome c reductase complex (complex III or cytochrome b-c1 complex) that is part of the mitochondrial respiratory chain. The b-c1 complex mediates electron transfer from ubiquinol to cytochrome c. Contributes to the generation of a proton gradient across the mitochondrial membrane that is then used for ATP synthesis. This is Cytochrome b (MT-CYB) from Ctenomys leucodon (White-toothed tuco-tuco).